We begin with the raw amino-acid sequence, 1063 residues long: TBC1 domain family member 31 (1063 aa).

WD repeat units follow at residues 33–74 (HNTS…LCGN), 75–116 (RFNL…TVTK), 117–157 (ELVS…LDTF), 158–200 (QRKR…CDTL), 201–248 (VCKY…AKQL), 249–296 (FRII…IQTC), and 297–334 (KLLF…NIYS). Residues 424–599 (EFPTKYRMFI…KLFDNVFSNH (176 aa)) enclose the Rab-GAP TBC domain. The stretch at 699–951 (ELDYLRERQA…EAKKWEEAEE (253 aa)) forms a coiled coil. A mediates direct interaction with PJA2 region spans residues 1050–1053 (QAQN).

As to quaternary structure, interacts with PJA2; the interaction is direct and recruits PJA2 to centrosomes. Interacts with OFD1; regulates its activity in cilium assembly. Interacts with PRKACA.

It localises to the cytoplasm. The protein localises to the cytoskeleton. It is found in the microtubule organizing center. Its subcellular location is the centrosome. The protein resides in the centriolar satellite. It localises to the cilium basal body. Molecular adapter which is involved in cilium biogenesis. Part of a functional complex including OFD1 a centriolar protein involved in cilium assembly. Could regulate the cAMP-dependent phosphorylation of OFD1, and its subsequent ubiquitination by PJA2 which ultimately leads to its proteasomal degradation. The chain is TBC1 domain family member 31 from Bos taurus (Bovine).